Reading from the N-terminus, the 436-residue chain is Putative permease MJ0326 (436 aa).

12 helical membrane passes run 24–44 (LAGI…PQIL), 51–71 (FGAV…VMGL), 79–99 (LAPG…GMGI), 103–123 (VALG…LTKI), 139–159 (TAVG…GIIV), 171–191 (LMEP…ILVS), 194–214 (VIGA…ILGI), 235–255 (LDIM…FFFV), 322–342 (GFVS…YPVV), 345–365 (IPPY…MRSV), 381–401 (ITLL…LGFI), and 416–436 (VHWL…YLSG).

It belongs to the nucleobase:cation symporter-2 (NCS2) (TC 2.A.40) family. Azg-like subfamily.

It is found in the cell membrane. This Methanocaldococcus jannaschii (strain ATCC 43067 / DSM 2661 / JAL-1 / JCM 10045 / NBRC 100440) (Methanococcus jannaschii) protein is Putative permease MJ0326.